Reading from the N-terminus, the 93-residue chain is Small ribosomal subunit protein uS19m (93 aa).

The protein belongs to the universal ribosomal protein uS19 family. Component of the mitochondrial small ribosomal subunit (mt-SSU). Mature yeast 74S mitochondrial ribosomes consist of a small (37S) and a large (54S) subunit. The 37S small subunit contains a 15S ribosomal RNA (15S mt-rRNA) and at least 32 different proteins. The 54S large subunit contains a 21S rRNA (21S mt-rRNA) and at least 45 different proteins.

It is found in the mitochondrion. Its function is as follows. Component of the mitochondrial ribosome (mitoribosome), a dedicated translation machinery responsible for the synthesis of mitochondrial genome-encoded proteins, including at least some of the essential transmembrane subunits of the mitochondrial respiratory chain. The mitoribosomes are attached to the mitochondrial inner membrane and translation products are cotranslationally integrated into the membrane. The chain is Small ribosomal subunit protein uS19m (rsm19) from Schizosaccharomyces pombe (strain 972 / ATCC 24843) (Fission yeast).